Reading from the N-terminus, the 78-residue chain is MFKKSVLFATLLSGVMAFSTNADDKIILKHISVSSVSASPTVLEDTIADIARKYNASSWKVTSMRIDNNSTATAVLYK.

The signal sequence occupies residues 1 to 22; that stretch reads MFKKSVLFATLLSGVMAFSTNA.

This sequence belongs to the BhsA/McbA family.

The protein resides in the periplasm. Probably involved in reactive chlorine species (RCS) stress resistance. This is an uncharacterized protein from Escherichia coli (strain K12).